The chain runs to 500 residues: Na(+)/H(+) antiporter NhaB (500 aa).

The next 12 membrane-spanning stretches (helical) occupy residues F28–I50, M58–L78, V96–F116, A129–L149, T150–A170, L205–P225, F241–L261, I311–I331, F350–I370, M394–I414, V449–L469, and M477–S497.

Belongs to the NhaB Na(+)/H(+) (TC 2.A.34) antiporter family.

It localises to the cell inner membrane. The enzyme catalyses 2 Na(+)(in) + 3 H(+)(out) = 2 Na(+)(out) + 3 H(+)(in). Its function is as follows. Na(+)/H(+) antiporter that extrudes sodium in exchange for external protons. The sequence is that of Na(+)/H(+) antiporter NhaB from Pseudomonas fluorescens (strain Pf0-1).